The following is a 107-amino-acid chain: Cytochrome c oxidase assembly protein COX16 homolog, mitochondrial (107 aa).

Topologically, residues 1 to 14 (MFGYAVRRALRKSK) are mitochondrial matrix. Residues 15-37 (TLRYGVPMLLLIVGGSFGLREFS) form a helical membrane-spanning segment. The Mitochondrial intermembrane portion of the chain corresponds to 38–107 (QIRYDAVKIK…PEILKTNKTT (70 aa)). Positions 80–107 (NIRGPRPWEDPDLLQGRNPEILKTNKTT) are disordered.

Belongs to the COX16 family. As to quaternary structure, associates with the MITRAC complex. Interacts with MT-CO2/COX; specifically interacts with newly synthesized MT-CO2/COX. Interacts with SCO1, SCO2 and COA6.

The protein localises to the mitochondrion inner membrane. In terms of biological role, required for the assembly of the mitochondrial respiratory chain complex IV (CIV), also known as cytochrome c oxidase. Promotes the insertion of copper into the active site of cytochrome c oxidase subunit II (MT-CO2/COX2). Interacts specifically with newly synthesized MT-CO2/COX and its copper center-forming metallochaperones SCO1, SCO2 and COA6. Probably facilitates MT-CO2/COX2 association with the MITRAC assembly intermediate containing MT-CO1/COX1, thereby participating in merging the MT-CO1/COX1 and MT-CO2/COX2 assembly lines. This chain is Cytochrome c oxidase assembly protein COX16 homolog, mitochondrial, found in Bos taurus (Bovine).